The chain runs to 55 residues: Photosystem I reaction center subunit IX (55 aa).

A helical membrane pass occupies residues 7 to 27 (YLSVAPVLSTLWFGSLAGLLI).

This sequence belongs to the PsaJ family.

The protein localises to the plastid. Its subcellular location is the chloroplast thylakoid membrane. In terms of biological role, may help in the organization of the PsaE and PsaF subunits. The protein is Photosystem I reaction center subunit IX of Gossypium barbadense (Sea Island cotton).